Here is a 154-residue protein sequence, read N- to C-terminus: Ribosomal RNA large subunit methyltransferase H (154 aa).

Residues Leu71 and Gly103 each coordinate S-adenosyl-L-methionine.

This sequence belongs to the RNA methyltransferase RlmH family. In terms of assembly, homodimer.

It localises to the cytoplasm. The catalysed reaction is pseudouridine(1915) in 23S rRNA + S-adenosyl-L-methionine = N(3)-methylpseudouridine(1915) in 23S rRNA + S-adenosyl-L-homocysteine + H(+). Functionally, specifically methylates the pseudouridine at position 1915 (m3Psi1915) in 23S rRNA. This Solidesulfovibrio magneticus (strain ATCC 700980 / DSM 13731 / RS-1) (Desulfovibrio magneticus) protein is Ribosomal RNA large subunit methyltransferase H.